Consider the following 1030-residue polypeptide: Peroxisomal ATPase PEX6 (1030 aa).

The tract at residues 478–683 (VLLHSTTNNV…VETARMTATA (206 aa)) is AAA-cassette D1. Residues 767-956 (GILFYGPPGT…CSDAMLNAMS (190 aa)) are AAA-cassette D2. 772–779 (GPPGTGKT) contacts ATP.

The protein belongs to the AAA ATPase family. Interacts with PEX1; forming the PEX1-PEX6 AAA ATPase complex, which is composed of a heterohexamer formed by a trimer of PEX1-PEX6 dimers. Interacts with PEX15; anchors PEX1-PEX6 heterooligomers to the peroxisomal membrane and mediates their association with the peroxisomal importomer. Interacts with UBP15.

Its subcellular location is the cytoplasm. The protein localises to the cytosol. It is found in the peroxisome membrane. The enzyme catalyses ATP + H2O = ADP + phosphate + H(+). In terms of biological role, component of the PEX1-PEX6 AAA ATPase complex, a protein dislocase complex that mediates the ATP-dependent extraction of the PEX5 receptor from peroxisomal membranes, an essential step for PEX5 recycling. Specifically recognizes PEX5 monoubiquitinated at 'Cys-6', and pulls it out of the peroxisome lumen through the PEX2-PEX10-PEX12 retrotranslocation channel. Extraction by the PEX1-PEX6 AAA ATPase complex is accompanied by unfolding of the TPR repeats and release of bound cargo from PEX5. This Saccharomyces cerevisiae (strain ATCC 204508 / S288c) (Baker's yeast) protein is Peroxisomal ATPase PEX6.